A 377-amino-acid chain; its full sequence is Chaperone protein DnaJ (377 aa).

The J domain occupies 5–70 (DYYQVLGVSR…KKRSAYDQLG (66 aa)). Residues 138 to 216 (GVTKIISFKT…CYGEGRYINT (79 aa)) form a CR-type zinc finger. Residues C151, C154, C168, C171, C190, C193, C204, and C207 each contribute to the Zn(2+) site. CXXCXGXG motif repeat units lie at residues 151-158 (CDACAGKG), 168-175 (CPTCRGSG), 190-197 (CQTCRGAG), and 204-211 (CTKCYGEG).

This sequence belongs to the DnaJ family. As to quaternary structure, homodimer. The cofactor is Zn(2+).

Its subcellular location is the cytoplasm. Functionally, participates actively in the response to hyperosmotic and heat shock by preventing the aggregation of stress-denatured proteins and by disaggregating proteins, also in an autonomous, DnaK-independent fashion. Unfolded proteins bind initially to DnaJ; upon interaction with the DnaJ-bound protein, DnaK hydrolyzes its bound ATP, resulting in the formation of a stable complex. GrpE releases ADP from DnaK; ATP binding to DnaK triggers the release of the substrate protein, thus completing the reaction cycle. Several rounds of ATP-dependent interactions between DnaJ, DnaK and GrpE are required for fully efficient folding. Also involved, together with DnaK and GrpE, in the DNA replication of plasmids through activation of initiation proteins. This chain is Chaperone protein DnaJ, found in Orientia tsutsugamushi (strain Boryong) (Rickettsia tsutsugamushi).